Reading from the N-terminus, the 368-residue chain is MTSTTSKVTFGKSIGFRKELNRRVNAYLEAENISPRDNPPMYLKTAIILAWVVSAWTFVVFGPDVLWMKLLGCIVLGFGVSAVGFNISHDGNHGGYSKYQWVNYLSGLTHDAIGVSSYLWKFRHNVLHHTYTNILGHDVEIHGDELVRMSPSMEYRWYHRYQHWFIWFVYPFIPYYWSIADVQTMLFKRQYHDHEIPSPTWVDIATLLAFKAFGVAVFLIIPIAVGYSPLEAVIGASIVYMTHGLVACVVFMLAHVIEPAEFLDPDNLHIDDEWAIAQVKTTVDFAPNNPIINWYVGGLNYQTVHHLFPHICHIHYPKIAPILAEVCEEFGVNYAVHQTFFGALAANYSWLKKMSINPETKAIEQLTV.

The next 2 membrane-spanning stretches (helical) occupy residues 47–67 (IILAWVVSAWTFVVFGPDVLW) and 68–88 (MKLLGCIVLGFGVSAVGFNIS). A Histidine box-1 motif is present at residues 89–93 (HDGNH). The short motif at 124–129 (HNVLHH) is the Histidine box-2 element. The next 3 helical transmembrane spans lie at 164 to 184 (WFIWFVYPFIPYYWSIADVQT), 204 to 224 (IATLLAFKAFGVAVFLIIPIA), and 233 to 253 (VIGASIVYMTHGLVACVVFML). The Histidine box-3 signature appears at 305-309 (HHLFP).

It belongs to the fatty acid desaturase type 2 family. Fe(2+) serves as cofactor.

The protein localises to the cell inner membrane. The protein resides in the cellular thylakoid membrane. The catalysed reaction is a 1-[(9Z,12Z)-octadecdienoyl]-2-acyl-glycerolipid + 2 reduced [2Fe-2S]-[ferredoxin] + O2 + 2 H(+) = a 1-[(6Z,9Z,12Z)-octadectrienoyl]-2-acyl-glycerolipid + 2 oxidized [2Fe-2S]-[ferredoxin] + 2 H2O. Its pathway is lipid metabolism; polyunsaturated fatty acid biosynthesis. Activity requires ferredoxin, which is the natural electron donor, or cytochrome b5. In addition, activity is increased in the presence of the intermediate electron donors, NADPH and FADH(2). Desaturase involved in fatty acid biosynthesis. Introduces a double bond at carbon 6 of linoleoyl group (18:2) attached to the sn-1 position of the glycerol moiety of membrane glycerolipids, leading to the formation of gamma-linolenic acid (GLA). This is sn-1 linoleoyl-lipid 6-desaturase from Arthrospira platensis (Spirulina platensis).